The chain runs to 618 residues: Mitochondrial Rho GTPase 2 (618 aa).

Residues 1–592 (MRRDVRILLL…ELHPSSFWLR (592 aa)) lie on the Cytoplasmic side of the membrane. One can recognise a Miro 1 domain in the interval 2–168 (RRDVRILLLG…FYYAQKAVLH (167 aa)). G16, K17, T18, and S19 together coordinate GTP. T18 provides a ligand contact to Mg(2+). The Mg(2+) site is built by P35 and D57. A GTP-binding site is contributed by S59. Residue K96 forms a Glycyl lysine isopeptide (Lys-Gly) (interchain with G-Cter in ubiquitin) linkage. GTP contacts are provided by N118, K119, D121, A149, and K150. Residue K119 forms a Glycyl lysine isopeptide (Lys-Gly) (interchain with G-Cter in ubiquitin) linkage. K164 participates in a covalent cross-link: Glycyl lysine isopeptide (Lys-Gly) (interchain with G-Cter in ubiquitin). EF-hand domains follow at residues 184–219 (ACAQ…CFGH) and 304–339 (LGYQ…FPAA). The Ca(2+) site is built by D197, D199, D201, E208, D317, D319, D321, and E328. The Miro 2 domain maps to 414 to 576 (RSVLLCKVVG…FTQLATMAAF (163 aa)). Positions 426, 428, 429, 430, and 431 each coordinate GTP. Positions 426, 428, 429, 430, and 431 each coordinate GDP. S430 is a binding site for Mg(2+). E471 contacts Mg(2+). K525, D527, and C556 together coordinate GTP. Residues K525, D527, and C556 each contribute to the GDP site. Residues 593-615 (GLLGVVGAAVAAVLSFSLYRVLV) form a helical; Anchor for type IV membrane protein membrane-spanning segment. Over 616–618 (KSQ) the chain is Mitochondrial intermembrane.

It belongs to the mitochondrial Rho GTPase family. In terms of assembly, homodimer. Interacts with the kinesin-binding proteins TRAK1/OIP106 and TRAK2/GRIF1, forming a link between mitochondria and the trafficking apparatus of the microtubules. Interacts with ARMCX3. Found in a complex with KIF5B, OGT, RHOT1 and TRAK1. Post-translationally, ubiquitinated by PRKN in a PINK1-dependent manner, leading to its degradation. In terms of tissue distribution, ubiquitously expressed. Highly expressed in heart, liver, skeletal muscle, kidney and pancreas.

It localises to the mitochondrion outer membrane. It catalyses the reaction GTP + H2O = GDP + phosphate + H(+). It carries out the reaction ATP + H2O = ADP + phosphate + H(+). The catalysed reaction is UTP + H2O = UDP + phosphate + H(+). Functionally, atypical mitochondrial nucleoside-triphosphatase (NTPase) involved in mitochondrial trafficking. Probably involved in control of anterograde transport of mitochondria and their subcellular distribution. Can hydrolyze GTP. Can hydrolyze ATP and UTP. The protein is Mitochondrial Rho GTPase 2 (RHOT2) of Homo sapiens (Human).